Consider the following 383-residue polypeptide: S-adenosylmethionine synthase (383 aa).

His-15 is a binding site for ATP. Asp-17 is a binding site for Mg(2+). K(+) is bound at residue Glu-43. 2 residues coordinate L-methionine: Glu-56 and Gln-99. A flexible loop region spans residues 99–109 (QSPDINQGVDR). Residues 164 to 166 (DAK), 230 to 231 (RF), Asp-239, 245 to 246 (RK), Ala-262, and Lys-266 each bind ATP. Residue Asp-239 participates in L-methionine binding. L-methionine is bound at residue Lys-270.

This sequence belongs to the AdoMet synthase family. As to quaternary structure, homotetramer; dimer of dimers. Mg(2+) is required as a cofactor. K(+) serves as cofactor.

The protein resides in the cytoplasm. It catalyses the reaction L-methionine + ATP + H2O = S-adenosyl-L-methionine + phosphate + diphosphate. Its pathway is amino-acid biosynthesis; S-adenosyl-L-methionine biosynthesis; S-adenosyl-L-methionine from L-methionine: step 1/1. Functionally, catalyzes the formation of S-adenosylmethionine (AdoMet) from methionine and ATP. The overall synthetic reaction is composed of two sequential steps, AdoMet formation and the subsequent tripolyphosphate hydrolysis which occurs prior to release of AdoMet from the enzyme. In Shewanella putrefaciens (strain CN-32 / ATCC BAA-453), this protein is S-adenosylmethionine synthase.